The sequence spans 290 residues: 2-hydroxy-6-oxo-6-(2'-aminophenyl)hexa-2,4-dienoic acid hydrolase (290 aa).

Residues Ser114, Asp233, and His261 contribute to the active site.

Belongs to the DmpD/TodF/XylF esterase family. As to quaternary structure, homodimer.

The catalysed reaction is (2E,4E)-6-(2-aminophenyl)-2-hydroxy-6-oxohexa-2,4-dienoate + H2O = (2E)-2-hydroxypenta-2,4-dienoate + anthranilate + H(+). The protein operates within xenobiotic degradation; carbazole degradation. Involved in the degradation of carbazole, a toxic N-heterocyclic aromatic compound containing dibenzopyrrole system. Catalyzes the hydrolytic cleavage of a carbon-carbon bond of 2-hydroxy-6-oxo-6-(2'-aminophenyl)hexa-2,4-dienoic acid (HOPDA) to yield anthranilate. CarC is specific for 2-hydroxy-6-oxo-6-phenylhexa-2,4-dienoic acid (6-phenyl-HODA), and has little activity toward 2-hydroxy-6-oxohepta-2,4-dienoic acid and 2-hydroxymuconic semialdehyde. The effect of the presence of an amino group or hydroxyl group at the 2'-position of phenyl moiety of 6-phenyl-HODA on the enzyme activity is found to be small. The polypeptide is 2-hydroxy-6-oxo-6-(2'-aminophenyl)hexa-2,4-dienoic acid hydrolase (carC) (Metapseudomonas resinovorans (Pseudomonas resinovorans)).